The chain runs to 241 residues: Probable transcriptional regulatory protein H16_A0916 (241 aa).

The protein belongs to the TACO1 family.

The protein resides in the cytoplasm. The protein is Probable transcriptional regulatory protein H16_A0916 of Cupriavidus necator (strain ATCC 17699 / DSM 428 / KCTC 22496 / NCIMB 10442 / H16 / Stanier 337) (Ralstonia eutropha).